The primary structure comprises 374 residues: Phospho-2-dehydro-3-deoxyheptonate aldolase AMT16 (374 aa).

This sequence belongs to the class-I DAHP synthase family.

The catalysed reaction is D-erythrose 4-phosphate + phosphoenolpyruvate + H2O = 7-phospho-2-dehydro-3-deoxy-D-arabino-heptonate + phosphate. It functions in the pathway mycotoxin biosynthesis. Functionally, nonribosomal peptide synthetase; part of the gene clusters that mediate the biosynthesis of AM-toxins, host-selective toxins (HSTs) causing Alternaria blotch on apple, a worldwide distributed disease. AM-toxins are cyclic depsipeptides containing the 3 residues 2-hydroxy-isovaleric acid (2-HIV), dehydroalanine, L-alanine which are common for all 3 AM-toxins I to III. The fourth precursor is L-alpha-amino-methoxyphenyl-valeric acid (L-Amv) for AM-toxin I, L-alpha-amino-phenyl-valeric acid (L-Apv) for AM-toxin II, and L-alpha-amino-hydroxyphenyl-valeric acid (L-Ahv) for AM-toxin III. AM-toxins have two target sites for affecting susceptible apple cells; they cause invagination of the plasma membrane and electrolyte loss and chloroplast disorganization. The non-ribosomal peptide synthetase AMT1 contains 4 catalytic modules and is responsible for activation of each residue in AM-toxin. The aldo-keto reductase AMT2 catalyzes the conversion of 2-keto-isovaleric acid (2-KIV) to 2-hydroxy-isovaleric acid (2-HIV), one of the precursor residues incorporated by AMT1 during AM-toxin biosynthesis, by reduction of its ketone to an alcohol. The cytochrome P450 monooxygenase AMT3 and the thioesterase AMT4 are also important for AM-toxin production, but their exact function within the AM-toxin biosynthesis are not known yet. Up to 21 proteins (including AMT1 to AMT4) are predicted to be involved in AM-toxin biosynthesis since their expression ishighly up-regulated in AM-toxin-producing cultures. This is Phospho-2-dehydro-3-deoxyheptonate aldolase AMT16 from Alternaria alternata (Alternaria rot fungus).